We begin with the raw amino-acid sequence, 522 residues long: Tubulin-specific chaperone E (522 aa).

In terms of domain architecture, CAP-Gly spans 27–71 (GNVPPTPGLWLGVEWDNHLRGKHNGTHEGTKYFTCSHPTGGSFIR). 7 LRR repeats span residues 149–170 (NIMT…AHIS), 175–196 (NLTS…SSLA), 201–222 (NLKV…QCAS), 226–248 (ALEE…NNLQ), 249–270 (NLTI…HTIA), 274–295 (RLKQ…DVDF), and 303–324 (SLTS…NELH). The LRRCT domain occupies 337–379 (NPLMDLDKNPETVRQLIIAKIENLKFLNKTEIFPTERRGAELD).

Belongs to the TBCE family. Supercomplex made of cofactors A to E. Cofactors A and D function by capturing and stabilizing tubulin in a quasi-native conformation. Cofactor E binds to the cofactor D-tubulin complex; interaction with cofactor C then causes the release of tubulin polypeptides that are committed to the native state.

The protein localises to the cytoplasm. It is found in the cytoskeleton. In terms of biological role, tubulin-folding protein; involved in the second step of the tubulin folding pathway. The sequence is that of Tubulin-specific chaperone E (tbce) from Xenopus laevis (African clawed frog).